The primary structure comprises 304 residues: Oxygen-dependent coproporphyrinogen-III oxidase (304 aa).

Ser-93 contributes to the substrate binding site. Positions 97 and 107 each coordinate a divalent metal cation. His-107 functions as the Proton donor in the catalytic mechanism. 109–111 provides a ligand contact to substrate; sequence NVR. Residues His-146 and His-176 each coordinate a divalent metal cation. An important for dimerization region spans residues 241 to 276; it reads YVEFNLVYDRGTLFGLQSGGRTESILMSLPPQVRWG. 259–261 contacts substrate; sequence GGR.

Belongs to the aerobic coproporphyrinogen-III oxidase family. As to quaternary structure, homodimer. A divalent metal cation is required as a cofactor.

The protein resides in the cytoplasm. The enzyme catalyses coproporphyrinogen III + O2 + 2 H(+) = protoporphyrinogen IX + 2 CO2 + 2 H2O. Its pathway is porphyrin-containing compound metabolism; protoporphyrin-IX biosynthesis; protoporphyrinogen-IX from coproporphyrinogen-III (O2 route): step 1/1. Its function is as follows. Involved in the heme biosynthesis. Catalyzes the aerobic oxidative decarboxylation of propionate groups of rings A and B of coproporphyrinogen-III to yield the vinyl groups in protoporphyrinogen-IX. This is Oxygen-dependent coproporphyrinogen-III oxidase from Pseudomonas syringae pv. syringae (strain B728a).